The following is a 215-amino-acid chain: MGKVYDRFEERLEIQAIADDITSKYVPPHVNIFYCLGGITLTCFLVQVATGFAMTFYYRPTVTEAFASVQYLMTEVNFGWLIRSIHRWSASMMVLMMILHVFRVYLTGGFKKPRELTWVTGVILAVLTVSFGVTGYSLPWDQIGYWAVKIVTGVPEAIPVIGSPLVELLRGSVSVGQSTLTRFYSLHTFILPLLTAVFMPMHFLMIRKQGISGPL.

The chain crosses the membrane as a helical span at residues 32-52 (IFYCLGGITLTCFLVQVATGF). Position 35 (Cys35) interacts with heme c. His86 and His100 together coordinate heme b. The next 3 helical transmembrane spans lie at 90 to 110 (ASMMVLMMILHVFRVYLTGGF), 116 to 136 (LTWVTGVILAVLTVSFGVTGY), and 186 to 206 (LHTFILPLLTAVFMPMHFLMI). Residues His187 and His202 each contribute to the heme b site.

This sequence belongs to the cytochrome b family. PetB subfamily. As to quaternary structure, the 4 large subunits of the cytochrome b6-f complex are cytochrome b6, subunit IV (17 kDa polypeptide, PetD), cytochrome f and the Rieske protein, while the 4 small subunits are PetG, PetL, PetM and PetN. The complex functions as a dimer. It depends on heme b as a cofactor. The cofactor is heme c.

It localises to the plastid. It is found in the chloroplast thylakoid membrane. Its function is as follows. Component of the cytochrome b6-f complex, which mediates electron transfer between photosystem II (PSII) and photosystem I (PSI), cyclic electron flow around PSI, and state transitions. The chain is Cytochrome b6 from Pinus koraiensis (Korean pine).